Reading from the N-terminus, the 233-residue chain is Proteasome subunit beta type-6 (233 aa).

Residues 1 to 12 constitute a propeptide, removed in mature form; the sequence is MDLNLDAPHSMG. Threonine 13 functions as the Nucleophile in the catalytic mechanism.

This sequence belongs to the peptidase T1B family. Component of the 20S core complex of the 26S proteasome. The 26S proteasome is composed of a core protease (CP), known as the 20S proteasome, capped at one or both ends by the 19S regulatory particle (RP/PA700). The 20S proteasome core is composed of 28 subunits that are arranged in four stacked rings, resulting in a barrel-shaped structure. The two end rings are each formed by seven alpha subunits, and the two central rings are each formed by seven beta subunits. The catalytic chamber with the active sites is on the inside of the barrel.

It localises to the cytoplasm. It is found in the nucleus. The catalysed reaction is Cleavage of peptide bonds with very broad specificity.. Its function is as follows. The proteasome is a multicatalytic proteinase complex which is characterized by its ability to cleave peptides with Arg, Phe, Tyr, Leu, and Glu adjacent to the leaving group at neutral or slightly basic pH. The proteasome has an ATP-dependent proteolytic activity. This is Proteasome subunit beta type-6 (PBA1) from Arabidopsis thaliana (Mouse-ear cress).